The chain runs to 1101 residues: Furin-like protease 1, isoform 1-CRR (1101 aa).

Positions 1–57 (MKNDVVRWSRQPTSNTTNSSSSSRSDSNSTHKHRSKSNKLNARQLGSNAARSCQQRS) are disordered. Positions 13 to 28 (TSNTTNSSSSSRSDSN) are enriched in low complexity. N15, N18, and N28 each carry an N-linked (GlcNAc...) asparagine glycan. Over residues 38-57 (NKLNARQLGSNAARSCQQRS) the composition is skewed to polar residues. An N-linked (GlcNAc...) asparagine glycan is attached at N108. A helical transmembrane segment spans residues 119–139 (VFLLALQFSAVVFLCNINVGF). Residues 150–163 (SAGGSSPAAPSSAP) show a composition bias toward low complexity. A disordered region spans residues 150-187 (SAGGSSPAAPSSAPSSPPTVAVPPPPPPSSALKVDPNG). Residues 164–178 (SSPPTVAVPPPPPPS) show a composition bias toward pro residues. An N-linked (GlcNAc...) asparagine glycan is attached at N333. The Peptidase S8 domain maps to 340–654 (MWYLNRGGGL…YGLMDAAEMV (315 aa)). Active-site charge relay system residues include D372 and H413. A glycan (N-linked (GlcNAc...) asparagine) is linked at N426. 2 disulfide bridges follow: C430/C579 and C522/C552. The Charge relay system role is filled by S587. Residue N606 is glycosylated (N-linked (GlcNAc...) asparagine). Positions 662-791 (AVPEQQRCEI…DMIFYGTETP (130 aa)) constitute a P/Homo B domain. C669 and C695 are joined by a disulfide. 2 N-linked (GlcNAc...) asparagine glycosylation sites follow: N727 and N859. The tract at residues 886 to 915 (EEDEQDDEVTRGPVNPYSSSPMDHSLLMSN) is disordered. Residues 901 to 915 (PYSSSPMDHSLLMSN) are compositionally biased toward polar residues. N978 is a glycosylation site (N-linked (GlcNAc...) asparagine). The helical transmembrane segment at 1014-1034 (TVLLLVSVIFTLMGVAVAGGI) threads the bilayer.

This sequence belongs to the peptidase S8 family. Furin subfamily. The cofactor is Ca(2+). As to expression, in adults, isoform 1-CRR is expressed in CNS, fat body, and female reproductive tissues, and in embryos, in anal pads, hindgut, developing antennomaxillary complex, oenocytes, clipeolabrum, pharynx, trachea, CNS and developing posterior spiracles.

The protein localises to the golgi apparatus membrane. It carries out the reaction Release of mature proteins from their proproteins by cleavage of -Arg-Xaa-Yaa-Arg-|-Zaa- bonds, where Xaa can be any amino acid and Yaa is Arg or Lys. Releases albumin, complement component C3 and von Willebrand factor from their respective precursors.. Its function is as follows. Furin is likely to represent the ubiquitous endoprotease activity within constitutive secretory pathways and capable of cleavage at the RX(K/R)R consensus motif. The sequence is that of Furin-like protease 1, isoform 1-CRR (Fur1) from Drosophila melanogaster (Fruit fly).